A 361-amino-acid polypeptide reads, in one-letter code: DNA replication and repair protein RecF (361 aa).

Residue 30–37 (GDNAQGKT) coordinates ATP.

The protein belongs to the RecF family.

The protein resides in the cytoplasm. Functionally, the RecF protein is involved in DNA metabolism; it is required for DNA replication and normal SOS inducibility. RecF binds preferentially to single-stranded, linear DNA. It also seems to bind ATP. The protein is DNA replication and repair protein RecF of Clostridium botulinum (strain Eklund 17B / Type B).